We begin with the raw amino-acid sequence, 169 residues long: Ribosome maturation factor RimP (169 aa).

It belongs to the RimP family.

It is found in the cytoplasm. Its function is as follows. Required for maturation of 30S ribosomal subunits. This chain is Ribosome maturation factor RimP, found in Coprothermobacter proteolyticus (strain ATCC 35245 / DSM 5265 / OCM 4 / BT).